A 252-amino-acid chain; its full sequence is H-2 class II histocompatibility antigen, A-F beta chain (252 aa).

Residues 1–16 (AAVVVLMVLSSPGTEG) form the signal peptide. The segment at 17–109 (GNSERHFVSQ…VETPTSLRRL (93 aa)) is beta-1. Residues 17-213 (GNSERHFVSQ…RAQSESARSK (197 aa)) are Extracellular-facing. Disulfide bonds link C31-C93 and C132-C188. N35 is a glycosylation site (N-linked (GlcNAc...) asparagine). Residues 110–203 (EQPNVVISLS…SLKSPITVEW (94 aa)) are beta-2. The region spanning 112–200 (PNVVISLSRT…EHPSLKSPIT (89 aa)) is the Ig-like C1-type domain. The interval 204-213 (RAQSESARSK) is connecting peptide. The chain crosses the membrane as a helical span at residues 214–234 (MLSGIGGCVLGVIFLGLGLFI). Residues 235–252 (RYRSQKGPRGPPPAGLLQ) lie on the Cytoplasmic side of the membrane.

The protein belongs to the MHC class II family. In terms of processing, ubiquitinated in immature dendritic cells leading to down-regulation of MHC class II.

The protein resides in the membrane. This chain is H-2 class II histocompatibility antigen, A-F beta chain (H2-Ab1), found in Mus musculus (Mouse).